The sequence spans 134 residues: NADPH-dependent 7-cyano-7-deazaguanine reductase (134 aa).

The Thioimide intermediate role is filled by Cys48. The Proton donor role is filled by Asp55. Substrate-binding positions include 70 to 72 (VEL) and 89 to 90 (QE).

The protein belongs to the GTP cyclohydrolase I family. QueF type 1 subfamily.

It localises to the cytoplasm. The catalysed reaction is 7-aminomethyl-7-carbaguanine + 2 NADP(+) = 7-cyano-7-deazaguanine + 2 NADPH + 3 H(+). It functions in the pathway tRNA modification; tRNA-queuosine biosynthesis. Catalyzes the NADPH-dependent reduction of 7-cyano-7-deazaguanine (preQ0) to 7-aminomethyl-7-deazaguanine (preQ1). The sequence is that of NADPH-dependent 7-cyano-7-deazaguanine reductase from Caldanaerobacter subterraneus subsp. tengcongensis (strain DSM 15242 / JCM 11007 / NBRC 100824 / MB4) (Thermoanaerobacter tengcongensis).